A 405-amino-acid polypeptide reads, in one-letter code: Pleckstrin homology-like domain family A member 1 (405 aa).

2 stretches are compositionally biased toward basic and acidic residues: residues 1 to 11 (MRRTPAAERLS) and 54 to 63 (RSPEDGREQP). Disordered stretches follow at residues 1 to 67 (MRRT…AHGS), 189 to 217 (QLQQ…VASL), and 293 to 405 (QQHL…SNSA). The 125-residue stretch at 153–277 (ALKEGVLEKR…AEITLQMVQY (125 aa)) folds into the PH domain. The segment covering 189–202 (QLQQQQQQQQPGQG) has biased composition (low complexity). Residues 204–213 (AEPSQPSGPT) are compositionally biased toward polar residues. Residues 294–309 (QHLVQQQPPQTQQIQP) show a composition bias toward low complexity. The segment at 309 to 344 (PQPQPQIQPQPQPQIQPQPQPQPQPQPQPQPQPQPQ) is 16 X 2 AA repeats of P-Q. The span at 310 to 342 (QPQPQIQPQPQPQIQPQPQPQPQPQPQPQPQPQ) shows a compositional bias: pro residues. The span at 350–376 (PHPHPHPYSHPHQHPHPHPHPHPHPHP) shows a compositional bias: basic residues. The interval 354–377 (PHPYSHPHQHPHPHPHPHPHPHPH) is 11 X 2 AA repeats of P-H. Over residues 378 to 389 (PYQLQHAHQPLH) the composition is skewed to low complexity.

As to quaternary structure, interacts with RPL14, EIF3S7 and PABPC4. In terms of tissue distribution, widely expressed with very high levels in adult liver and high levels in adult lung. According to PubMed:10428057 expressed at low levels in liver. Expressed at increased levels in atherosclerotic lesions observed in hyperhomocysteinema.

It is found in the cytoplasm. Its subcellular location is the cytoplasmic vesicle. The protein resides in the nucleus. The protein localises to the nucleolus. Functionally, seems to be involved in regulation of apoptosis. May be involved in detachment-mediated programmed cell death. May mediate apoptosis during neuronal development. May be involved in regulation of anti-apoptotic effects of IGF1. Required for TCR-induced apoptosis and expression of TNFRSF6/FAS in a T-cell hybridoma cell line. May be involved in translational regulation. This Mus musculus (Mouse) protein is Pleckstrin homology-like domain family A member 1 (Phlda1).